A 485-amino-acid polypeptide reads, in one-letter code: Aspartyl/glutamyl-tRNA(Asn/Gln) amidotransferase subunit B (485 aa).

Belongs to the GatB/GatE family. GatB subfamily. Heterotrimer of A, B and C subunits.

The enzyme catalyses L-glutamyl-tRNA(Gln) + L-glutamine + ATP + H2O = L-glutaminyl-tRNA(Gln) + L-glutamate + ADP + phosphate + H(+). It catalyses the reaction L-aspartyl-tRNA(Asn) + L-glutamine + ATP + H2O = L-asparaginyl-tRNA(Asn) + L-glutamate + ADP + phosphate + 2 H(+). Functionally, allows the formation of correctly charged Asn-tRNA(Asn) or Gln-tRNA(Gln) through the transamidation of misacylated Asp-tRNA(Asn) or Glu-tRNA(Gln) in organisms which lack either or both of asparaginyl-tRNA or glutaminyl-tRNA synthetases. The reaction takes place in the presence of glutamine and ATP through an activated phospho-Asp-tRNA(Asn) or phospho-Glu-tRNA(Gln). This Anaplasma marginale (strain St. Maries) protein is Aspartyl/glutamyl-tRNA(Asn/Gln) amidotransferase subunit B.